The chain runs to 216 residues: GTP cyclohydrolase 1 (216 aa).

Residues cysteine 108, histidine 111, and cysteine 179 each contribute to the Zn(2+) site.

The protein belongs to the GTP cyclohydrolase I family. As to quaternary structure, toroid-shaped homodecamer, composed of two pentamers of five dimers.

The enzyme catalyses GTP + H2O = 7,8-dihydroneopterin 3'-triphosphate + formate + H(+). The protein operates within cofactor biosynthesis; 7,8-dihydroneopterin triphosphate biosynthesis; 7,8-dihydroneopterin triphosphate from GTP: step 1/1. The chain is GTP cyclohydrolase 1 from Shewanella sp. (strain ANA-3).